The chain runs to 437 residues: Adenosylhomocysteinase (437 aa).

Positions 54, 130, and 155 each coordinate substrate. Residue 156–158 (TTT) participates in NAD(+) binding. Substrate is bound by residues lysine 185 and aspartate 189. NAD(+) contacts are provided by residues asparagine 190, 219–224 (GYGDVG), glutamate 242, asparagine 277, 298–300 (IGH), and asparagine 345.

Belongs to the adenosylhomocysteinase family. Homotetramer. NAD(+) is required as a cofactor.

The protein resides in the cytoplasm. It catalyses the reaction S-adenosyl-L-homocysteine + H2O = L-homocysteine + adenosine. It functions in the pathway amino-acid biosynthesis; L-homocysteine biosynthesis; L-homocysteine from S-adenosyl-L-homocysteine: step 1/1. Adenosylhomocysteine is a competitive inhibitor of S-adenosyl-L-methionine-dependent methyl transferase reactions; therefore adenosylhomocysteinase may play a key role in the control of methylations via regulation of the intracellular concentration of adenosylhomocysteine. This is Adenosylhomocysteinase from Leishmania donovani.